A 311-amino-acid chain; its full sequence is HPr kinase/phosphorylase (311 aa).

Residues H136 and K157 contribute to the active site. An ATP-binding site is contributed by G151 to S158. Residue S158 participates in Mg(2+) binding. D175 acts as the Proton acceptor; for phosphorylation activity. Proton donor; for dephosphorylation activity in catalysis. The important for the catalytic mechanism of both phosphorylation and dephosphorylation stretch occupies residues L199–N208. Residue E200 participates in Mg(2+) binding. Residue R241 is part of the active site. The interval P262–R267 is important for the catalytic mechanism of dephosphorylation.

Belongs to the HPrK/P family. Homohexamer. The cofactor is Mg(2+).

It catalyses the reaction [HPr protein]-L-serine + ATP = [HPr protein]-O-phospho-L-serine + ADP + H(+). The catalysed reaction is [HPr protein]-O-phospho-L-serine + phosphate + H(+) = [HPr protein]-L-serine + diphosphate. Catalyzes the ATP- as well as the pyrophosphate-dependent phosphorylation of a specific serine residue in HPr, a phosphocarrier protein of the phosphoenolpyruvate-dependent sugar phosphotransferase system (PTS). HprK/P also catalyzes the pyrophosphate-producing, inorganic phosphate-dependent dephosphorylation (phosphorolysis) of seryl-phosphorylated HPr (P-Ser-HPr). The two antagonistic activities of HprK/P are regulated by several intracellular metabolites, which change their concentration in response to the absence or presence of rapidly metabolisable carbon sources (glucose, fructose, etc.) in the growth medium. Therefore, by controlling the phosphorylation state of HPr, HPrK/P is a sensor enzyme that plays a major role in the regulation of carbon metabolism and sugar transport: it mediates carbon catabolite repression (CCR), and regulates PTS-catalyzed carbohydrate uptake and inducer exclusion. The chain is HPr kinase/phosphorylase from Staphylococcus haemolyticus (strain JCSC1435).